An 82-amino-acid chain; its full sequence is MPKRVLQGVVVSDKQDKTVVVRVERRFTHPLLKKTVRRSKKYHAHDEANTWSIGDTVWIEEHRPLSKLKNWIVVQGEKRAEV.

The protein belongs to the universal ribosomal protein uS17 family. Part of the 30S ribosomal subunit.

Its function is as follows. One of the primary rRNA binding proteins, it binds specifically to the 5'-end of 16S ribosomal RNA. This chain is Small ribosomal subunit protein uS17, found in Azorhizobium caulinodans (strain ATCC 43989 / DSM 5975 / JCM 20966 / LMG 6465 / NBRC 14845 / NCIMB 13405 / ORS 571).